A 146-amino-acid polypeptide reads, in one-letter code: MTSAITEQLLKAKKAKGITFTELEQLLGRDEVWIASVFYRQSTASPEEAEKLLTALGLDLALADELTTPPVKGCLEPVIPTDPLIYRFYEIMQVYGLPLKDVIQEKFGDGIMSAIDFTLDVDKVEDPKGDRVKVTMCGKFLAYKKW.

Catalysis depends on residues R87, E90, and S113.

This sequence belongs to the cyanase family.

It catalyses the reaction cyanate + hydrogencarbonate + 3 H(+) = NH4(+) + 2 CO2. Its function is as follows. Catalyzes the reaction of cyanate with bicarbonate to produce ammonia and carbon dioxide. The sequence is that of Cyanate hydratase from Synechococcus elongatus (strain ATCC 33912 / PCC 7942 / FACHB-805) (Anacystis nidulans R2).